A 183-amino-acid polypeptide reads, in one-letter code: MMPLLNTITTPYAEAFLQVAENRNEVDEVVAQSKSLLELWGQSSEFSEAMASPVLEVETKKAVLEKIFSKEITPSFLNLLKLLADRKRIGYLDAVLERLLELYREQRNIALATVTSATSLNEDQQAEILKTVQSVAGTDNLELNLKVDPNLIGGFVVNVGSKVIDASLSSQVRRLGLALAKVS.

Belongs to the ATPase delta chain family. As to quaternary structure, F-type ATPases have 2 components, F(1) - the catalytic core - and F(0) - the membrane proton channel. F(1) has five subunits: alpha(3), beta(3), gamma(1), delta(1), epsilon(1). CF(0) has four main subunits: a(1), b(1), b'(1) and c(10-14). The alpha and beta chains form an alternating ring which encloses part of the gamma chain. F(1) is attached to F(0) by a central stalk formed by the gamma and epsilon chains, while a peripheral stalk is formed by the delta, b and b' chains.

It is found in the cellular thylakoid membrane. In terms of biological role, f(1)F(0) ATP synthase produces ATP from ADP in the presence of a proton or sodium gradient. F-type ATPases consist of two structural domains, F(1) containing the extramembraneous catalytic core and F(0) containing the membrane proton channel, linked together by a central stalk and a peripheral stalk. During catalysis, ATP synthesis in the catalytic domain of F(1) is coupled via a rotary mechanism of the central stalk subunits to proton translocation. This protein is part of the stalk that links CF(0) to CF(1). It either transmits conformational changes from CF(0) to CF(1) or is implicated in proton conduction. The chain is ATP synthase subunit delta from Prochlorococcus marinus (strain SARG / CCMP1375 / SS120).